Here is a 700-residue protein sequence, read N- to C-terminus: Interleukin-1 receptor accessory protein-like 1-B (700 aa).

A signal peptide spans 1-18 (MRSRVPLQILLYAAVIRS). The Extracellular portion of the chain corresponds to 19–357 (LKVVSKRGSV…QLSRRELMYT (339 aa)). The Ig-like C2-type 1 domain maps to 32–134 (TDWSVDYLRY…YCMKVSMALT (103 aa)). A disulfide bridge connects residues C53 and C118. N-linked (GlcNAc...) asparagine glycosylation is found at N63, N122, N138, N213, N264, and N331. 2 consecutive Ig-like C2-type domains span residues 143-232 (CYNS…TELT) and 242-350 (PKIL…IQLS). A disulfide bridge links C164 with C216. A disulfide bridge links C267 with C334. The chain crosses the membrane as a helical span at residues 358 to 378 (VELAGGLGAILLMLIFLVSLY). Residues 379–700 (KCYRIELMLF…RETSISSVIW (322 aa)) are Cytoplasmic-facing. In terms of domain architecture, TIR spans 403 to 559 (KDYDAYVSYT…RFWKQLQYEM (157 aa)). E491 is a catalytic residue. The interval 564–700 (PEPKLSHEQV…RETSISSVIW (137 aa)) is required for synaptic vesicle accumulation during synaptogenesis.

This sequence belongs to the interleukin-1 receptor family.

It localises to the cell membrane. It is found in the cytoplasm. The enzyme catalyses NAD(+) + H2O = ADP-D-ribose + nicotinamide + H(+). Its function is as follows. May regulate secretion and presynaptic differentiation through inhibition of the activity of N-type voltage-gated calcium channel. During presynaptic differentiation may regulate both synaptic vesicle accumulation in axon terminals and subsequent axon terminal remodeling. This is Interleukin-1 receptor accessory protein-like 1-B (il1rapl1b) from Danio rerio (Zebrafish).